Consider the following 344-residue polypeptide: Anthranilate phosphoribosyltransferase (344 aa).

5-phospho-alpha-D-ribose 1-diphosphate-binding positions include glycine 84, 87 to 88 (GD), threonine 92, 94 to 97 (NIST), 112 to 120 (KHGNRSVSS), and serine 124. Glycine 84 contacts anthranilate. Residue serine 96 participates in Mg(2+) binding. Asparagine 115 provides a ligand contact to anthranilate. Anthranilate is bound at residue arginine 170. Mg(2+)-binding residues include aspartate 229 and glutamate 230.

This sequence belongs to the anthranilate phosphoribosyltransferase family. Homodimer. It depends on Mg(2+) as a cofactor.

The catalysed reaction is N-(5-phospho-beta-D-ribosyl)anthranilate + diphosphate = 5-phospho-alpha-D-ribose 1-diphosphate + anthranilate. Its pathway is amino-acid biosynthesis; L-tryptophan biosynthesis; L-tryptophan from chorismate: step 2/5. Its function is as follows. Catalyzes the transfer of the phosphoribosyl group of 5-phosphorylribose-1-pyrophosphate (PRPP) to anthranilate to yield N-(5'-phosphoribosyl)-anthranilate (PRA). The chain is Anthranilate phosphoribosyltransferase from Xylella fastidiosa (strain 9a5c).